The following is a 70-amino-acid chain: Large ribosomal subunit protein bL31 (70 aa).

Residues C16, C18, C37, and C40 each contribute to the Zn(2+) site.

It belongs to the bacterial ribosomal protein bL31 family. Type A subfamily. As to quaternary structure, part of the 50S ribosomal subunit. Zn(2+) serves as cofactor.

Binds the 23S rRNA. In Cronobacter sakazakii (strain ATCC BAA-894) (Enterobacter sakazakii), this protein is Large ribosomal subunit protein bL31.